A 308-amino-acid polypeptide reads, in one-letter code: uncharacterized protein (308 aa).

The next 5 helical transmembrane spans lie at 46-66 (GISAGVVASVLVGCLLAGVLQ), 82-102 (LLAALLGAIAVGMLSWMLLWM), 159-179 (AAIGAALAGIGTAVVMAFLIF), 190-210 (FFQVMGTLLLIIVGGLVIGVL), and 271-291 (LYLFQAIAYGIFLSVIGSLYF).

Belongs to the oxidase-dependent Fe transporter (OFeT) (TC 9.A.10.1) family.

It is found in the cell membrane. This is an uncharacterized protein from Synechocystis sp. (strain ATCC 27184 / PCC 6803 / Kazusa).